The sequence spans 1343 residues: DNA-directed RNA polymerase subunit beta (1343 aa).

It belongs to the RNA polymerase beta chain family. In terms of assembly, the RNAP catalytic core consists of 2 alpha, 1 beta, 1 beta' and 1 omega subunit. When a sigma factor is associated with the core the holoenzyme is formed, which can initiate transcription.

It carries out the reaction RNA(n) + a ribonucleoside 5'-triphosphate = RNA(n+1) + diphosphate. Its function is as follows. DNA-dependent RNA polymerase catalyzes the transcription of DNA into RNA using the four ribonucleoside triphosphates as substrates. In Shewanella piezotolerans (strain WP3 / JCM 13877), this protein is DNA-directed RNA polymerase subunit beta.